The following is a 508-amino-acid chain: Lysine-specific permease LysP (508 aa).

The next 12 membrane-spanning stretches (helical) occupy residues 43 to 63 (SMIALGGTIGTGLFLTSGDVI), 66 to 86 (AGPFGALTAYVLIGAMVYFLM), 112 to 132 (PAFGFALGWNYWLNWAITVAV), 144 to 164 (WLPDVPSWIFSLIALIIVFSI), 184 to 204 (ITVVVLFLIIGFLSIFGIMGG), 219 to 239 (FVGGLGSFTTGGGILGVLLVA), 270 to 290 (IFWRILVFYILSIFVMAAIIP), 314 to 334 (VGFSIAASIMNAVVLTSVVSA), 367 to 387 (IPFIALLATTAVALLTFLTSI), 393 to 413 (FTLLVSASGLTGFIAWIGIAI), 436 to 456 (AKLFPFGPILALIMTVLVTLG), and 467 to 487 (WVQGVVMYAAIPLFFILYLGY).

Belongs to the amino acid-polyamine-organocation (APC) superfamily. Amino acid transporter (AAT) (TC 2.A.3.1) family.

It localises to the cell membrane. It carries out the reaction L-lysine(out) + H(+)(out) = L-lysine(in) + H(+)(in). Permease involved in lysine uptake. This is Lysine-specific permease LysP from Lactococcus lactis subsp. cremoris (strain MG1363).